Here is a 311-residue protein sequence, read N- to C-terminus: Cytosolic Fe-S cluster assembly factor Nubp1 homolog (311 aa).

The interval 1 to 20 (MQAPPPEHCPGVESENAGKG) is disordered. [4Fe-4S] cluster contacts are provided by Cys-9, Cys-23, Cys-26, and Cys-32. 63–70 (GKGGVGKS) is an ATP binding site. [4Fe-4S] cluster-binding residues include Cys-240 and Cys-243.

This sequence belongs to the Mrp/NBP35 ATP-binding proteins family. NUBP1/NBP35 subfamily. As to quaternary structure, heterotetramer of 2 Nubp1 and 2 Nubp2 chains. [4Fe-4S] cluster serves as cofactor.

The protein resides in the cytoplasm. Functionally, component of the cytosolic iron-sulfur (Fe/S) protein assembly (CIA) machinery. Required for maturation of extramitochondrial Fe-S proteins. The Nubp1-Nubp2 heterotetramer forms a Fe-S scaffold complex, mediating the de novo assembly of an Fe-S cluster and its transfer to target apoproteins. The sequence is that of Cytosolic Fe-S cluster assembly factor Nubp1 homolog from Drosophila simulans (Fruit fly).